Reading from the N-terminus, the 485-residue chain is Protein disulfide-isomerase 1 (485 aa).

A signal peptide spans 1–20 (MSLSVSFIFLLVASIGAVVA). Thioredoxin domains are found at residues 21-130 (DSEN…KKSG) and 342-470 (YLEG…KYAG). Cystine bridges form between Cys-52–Cys-55 and Cys-393–Cys-396. Residues Cys-393 and Cys-396 each act as nucleophile in the active site. The Prevents secretion from ER signature appears at 482–485 (HEEL).

This sequence belongs to the protein disulfide isomerase family.

The protein resides in the endoplasmic reticulum lumen. The enzyme catalyses Catalyzes the rearrangement of -S-S- bonds in proteins.. The protein is Protein disulfide-isomerase 1 (pdi-1) of Caenorhabditis elegans.